The chain runs to 157 residues: Ribosome maturation factor RimP (157 aa).

This sequence belongs to the RimP family.

It localises to the cytoplasm. Its function is as follows. Required for maturation of 30S ribosomal subunits. The polypeptide is Ribosome maturation factor RimP (Lactococcus lactis subsp. lactis (strain IL1403) (Streptococcus lactis)).